Consider the following 259-residue polypeptide: Thiazole synthase (259 aa).

The active-site Schiff-base intermediate with DXP is the Lys-100. 1-deoxy-D-xylulose 5-phosphate contacts are provided by residues Gly-161, 187–188, and 209–210; these read AG and NT.

Belongs to the ThiG family. Homotetramer. Forms heterodimers with either ThiH or ThiS.

The protein localises to the cytoplasm. It catalyses the reaction [ThiS sulfur-carrier protein]-C-terminal-Gly-aminoethanethioate + 2-iminoacetate + 1-deoxy-D-xylulose 5-phosphate = [ThiS sulfur-carrier protein]-C-terminal Gly-Gly + 2-[(2R,5Z)-2-carboxy-4-methylthiazol-5(2H)-ylidene]ethyl phosphate + 2 H2O + H(+). It participates in cofactor biosynthesis; thiamine diphosphate biosynthesis. Functionally, catalyzes the rearrangement of 1-deoxy-D-xylulose 5-phosphate (DXP) to produce the thiazole phosphate moiety of thiamine. Sulfur is provided by the thiocarboxylate moiety of the carrier protein ThiS. In vitro, sulfur can be provided by H(2)S. This is Thiazole synthase from Halalkalibacterium halodurans (strain ATCC BAA-125 / DSM 18197 / FERM 7344 / JCM 9153 / C-125) (Bacillus halodurans).